The primary structure comprises 205 residues: Keratin-associated protein 4-6 (205 aa).

Repeat copies occupy residues 20–24, 25–29, 30–34, 35–39, 40–44, 45–49, 50–54, 55–59, 60–64, 65–68, 69–73, 74–78, 79–83, 84–88, 89–93, 94–98, 99–103, 104–108, 114–118, 119–123, 124–128, 129–133, 134–138, 139–143, 144–148, 149–153, 154–158, 159–163, 164–168, and 169–173. Positions 20 to 173 are 30 X 5 AA repeats of C-C-[IRQVEL]-[SPTR]-[STVQRCP]; that stretch reads CCRPSCCQTT…CCRPCCCLRP (154 aa).

Belongs to the KRTAP type 4 family. Interacts with hair keratins. As to expression, expressed in the hair follicles.

In the hair cortex, hair keratin intermediate filaments are embedded in an interfilamentous matrix, consisting of hair keratin-associated proteins (KRTAP), which are essential for the formation of a rigid and resistant hair shaft through their extensive disulfide bond cross-linking with abundant cysteine residues of hair keratins. The matrix proteins include the high-sulfur and high-glycine-tyrosine keratins. The polypeptide is Keratin-associated protein 4-6 (KRTAP4-6) (Homo sapiens (Human)).